A 45-amino-acid polypeptide reads, in one-letter code: Protein PsbN (45 aa).

Residues 12–30 (FLSRSLVSFTGYALYTAFG) form a helical membrane-spanning segment.

This sequence belongs to the PsbN family.

It localises to the plastid. It is found in the chloroplast thylakoid membrane. Its function is as follows. May play a role in photosystem I and II biogenesis. This chain is Protein PsbN, found in Adiantum capillus-veneris (Maidenhair fern).